A 146-amino-acid chain; its full sequence is Probable U6 snRNA-associated Sm-like protein LSm4 (146 aa).

Residues Leu-2–Val-75 enclose the Sm domain. The span at Gln-80 to Pro-91 shows a compositional bias: basic and acidic residues. The disordered stretch occupies residues Gln-80 to Gly-146. Positions Gly-137 to Gly-146 are enriched in gly residues.

The protein belongs to the snRNP Sm proteins family. LSm subunits form a heteromer with a doughnut shape.

Its subcellular location is the nucleus. Its function is as follows. Binds specifically to the 3'-terminal U-tract of U6 snRNA. This is Probable U6 snRNA-associated Sm-like protein LSm4 from Nicotiana tabacum (Common tobacco).